A 448-amino-acid chain; its full sequence is Probable D-serine dehydratase (448 aa).

Lysine 119 carries the post-translational modification N6-(pyridoxal phosphate)lysine.

This sequence belongs to the serine/threonine dehydratase family. DsdA subfamily. Pyridoxal 5'-phosphate is required as a cofactor.

It catalyses the reaction D-serine = pyruvate + NH4(+). The polypeptide is Probable D-serine dehydratase (Pseudomonas paraeruginosa (strain DSM 24068 / PA7) (Pseudomonas aeruginosa (strain PA7))).